The chain runs to 235 residues: Leucyl/phenylalanyl-tRNA--protein transferase (235 aa).

This sequence belongs to the L/F-transferase family.

Its subcellular location is the cytoplasm. It carries out the reaction N-terminal L-lysyl-[protein] + L-leucyl-tRNA(Leu) = N-terminal L-leucyl-L-lysyl-[protein] + tRNA(Leu) + H(+). It catalyses the reaction N-terminal L-arginyl-[protein] + L-leucyl-tRNA(Leu) = N-terminal L-leucyl-L-arginyl-[protein] + tRNA(Leu) + H(+). The enzyme catalyses L-phenylalanyl-tRNA(Phe) + an N-terminal L-alpha-aminoacyl-[protein] = an N-terminal L-phenylalanyl-L-alpha-aminoacyl-[protein] + tRNA(Phe). Functions in the N-end rule pathway of protein degradation where it conjugates Leu, Phe and, less efficiently, Met from aminoacyl-tRNAs to the N-termini of proteins containing an N-terminal arginine or lysine. The protein is Leucyl/phenylalanyl-tRNA--protein transferase of Cellvibrio japonicus (strain Ueda107) (Pseudomonas fluorescens subsp. cellulosa).